The following is a 442-amino-acid chain: UDP-N-acetylmuramoylalanine--D-glutamate ligase (442 aa).

It belongs to the MurCDEF family.

The protein resides in the cytoplasm. It catalyses the reaction UDP-N-acetyl-alpha-D-muramoyl-L-alanine + D-glutamate + ATP = UDP-N-acetyl-alpha-D-muramoyl-L-alanyl-D-glutamate + ADP + phosphate + H(+). Its pathway is cell wall biogenesis; peptidoglycan biosynthesis. Its function is as follows. Cell wall formation. Catalyzes the addition of glutamate to the nucleotide precursor UDP-N-acetylmuramoyl-L-alanine (UMA). The protein is UDP-N-acetylmuramoylalanine--D-glutamate ligase of Buchnera aphidicola subsp. Baizongia pistaciae (strain Bp).